Consider the following 1448-residue polypeptide: DNA-directed RNA polymerase subunit beta' (1448 aa).

The Zn(2+) site is built by Cys66, Cys68, Cys81, and Cys84. Residues Asp474, Asp476, and Asp478 each contribute to the Mg(2+) site. The Zn(2+) site is built by Cys814, Cys888, Cys895, and Cys898. Residues 1408-1448 form a disordered region; the sequence is LEELQAAIGGDGESPSGDGAAGDGAPSEEDVEQIEASGSEN.

The protein belongs to the RNA polymerase beta' chain family. As to quaternary structure, the RNAP catalytic core consists of 2 alpha, 1 beta, 1 beta' and 1 omega subunit. When a sigma factor is associated with the core the holoenzyme is formed, which can initiate transcription. It depends on Mg(2+) as a cofactor. The cofactor is Zn(2+).

It catalyses the reaction RNA(n) + a ribonucleoside 5'-triphosphate = RNA(n+1) + diphosphate. Functionally, DNA-dependent RNA polymerase catalyzes the transcription of DNA into RNA using the four ribonucleoside triphosphates as substrates. In Salinibacter ruber (strain DSM 13855 / M31), this protein is DNA-directed RNA polymerase subunit beta'.